A 380-amino-acid chain; its full sequence is tRNA-specific 2-thiouridylase MnmA (380 aa).

Residues 25–32 and Met51 each bind ATP; that span reads AMSGGVDS. The active-site Nucleophile is Cys119. An intrachain disulfide couples Cys119 to Cys216. Position 143 (Gly143) interacts with ATP. The interaction with tRNA stretch occupies residues 166–168; it reads KDQ. Cys216 acts as the Cysteine persulfide intermediate in catalysis. Positions 320-321 are interaction with tRNA; that stretch reads RY.

The protein belongs to the MnmA/TRMU family.

It localises to the cytoplasm. It catalyses the reaction S-sulfanyl-L-cysteinyl-[protein] + uridine(34) in tRNA + AH2 + ATP = 2-thiouridine(34) in tRNA + L-cysteinyl-[protein] + A + AMP + diphosphate + H(+). Functionally, catalyzes the 2-thiolation of uridine at the wobble position (U34) of tRNA, leading to the formation of s(2)U34. This is tRNA-specific 2-thiouridylase MnmA from Deinococcus radiodurans (strain ATCC 13939 / DSM 20539 / JCM 16871 / CCUG 27074 / LMG 4051 / NBRC 15346 / NCIMB 9279 / VKM B-1422 / R1).